Reading from the N-terminus, the 352-residue chain is Adenosine deaminase (352 aa).

An N-acetylalanine modification is found at A2. Positions 15 and 17 each coordinate Zn(2+). Substrate contacts are provided by H17 and D19. K54 bears the N6-acetyllysine mark. G184 serves as a coordination point for substrate. H214 contacts Zn(2+). The active-site Proton donor is E217. K232 bears the N6-acetyllysine mark. D295 lines the Zn(2+) pocket. D296 lines the substrate pocket.

The protein belongs to the metallo-dependent hydrolases superfamily. Adenosine and AMP deaminases family. Interacts with DPP4 (via extracellular domain). Interacts with PLG (via Kringle 4 domain); the interaction stimulates PLG activation when in complex with DPP4. Requires Zn(2+) as cofactor. In terms of tissue distribution, detected in brain neurons in the median emninence (at protein level). Expressed in secondary deciduum (at protein level). Found in all tissues, occurs in large amounts in T-lymphocytes and, at the time of weaning, in gastrointestinal tissues.

The protein localises to the cell membrane. Its subcellular location is the cell junction. It is found in the cytoplasmic vesicle lumen. It localises to the cytoplasm. The protein resides in the lysosome. It catalyses the reaction adenosine + H2O + H(+) = inosine + NH4(+). The enzyme catalyses 2'-deoxyadenosine + H2O + H(+) = 2'-deoxyinosine + NH4(+). The catalysed reaction is cordycepin + H2O + H(+) = 3'-deoxyinosine + NH4(+). Catalyzes the hydrolytic deamination of adenosine and 2-deoxyadenosine. Plays an important role in purine metabolism and in adenosine homeostasis. Modulates signaling by extracellular adenosine, and so contributes indirectly to cellular signaling events. Acts as a positive regulator of T-cell coactivation, by binding DPP4. Its interaction with DPP4 regulates lymphocyte-epithelial cell adhesion. Enhances dendritic cell immunogenicity by affecting dendritic cell costimulatory molecule expression and cytokines and chemokines secretion. Enhances CD4+ T-cell differentiation and proliferation. Acts as a positive modulator of adenosine receptors ADORA1 and ADORA2A, by enhancing their ligand affinity via conformational change. Stimulates plasminogen activation. Plays a role in male fertility. Plays a protective role in early postimplantation embryonic development. Also responsible for the deamination of cordycepin (3'-deoxyadenosine), a fungal natural product that shows antitumor, antibacterial, antifungal, antivirus, and immune regulation properties. This is Adenosine deaminase (Ada) from Mus musculus (Mouse).